The sequence spans 392 residues: DNA replication and repair protein RecF (392 aa).

30–37 contributes to the ATP binding site; it reads GPNAAGKT.

This sequence belongs to the RecF family.

The protein resides in the cytoplasm. The RecF protein is involved in DNA metabolism; it is required for DNA replication and normal SOS inducibility. RecF binds preferentially to single-stranded, linear DNA. It also seems to bind ATP. This is DNA replication and repair protein RecF from Chloroflexus aurantiacus (strain ATCC 29364 / DSM 637 / Y-400-fl).